The sequence spans 605 residues: Capsid scaffolding protein (605 aa).

Active-site charge relay system residues include histidine 48, serine 116, and histidine 139. Residues 235–275 (ASDAPDLQKPDKALQSPPPASTDPDTMLSGNAGEGATACGG) are disordered. The interval 281–300 (QDLISVPRNTFMTLLQTNLD) is interaction with pAP. Disordered regions lie at residues 403 to 432 (DYVP…PGED) and 489 to 588 (PHQS…KSVS). The short motif at 410–416 (RSNKRKR) is the Nuclear localization signal element. Residues 568-579 (ASASGVAQSKEP) are compositionally biased toward polar residues. Positions 585 to 605 (KSVSAHLKSIFCEELLNKRVA) are interaction with major capsid protein.

The protein belongs to the herpesviridae capsid scaffolding protein family. Homomultimer. Interacts with major capsid protein. As to quaternary structure, exists in a monomer-dimer equilibrium with the dimer being the active species. Capsid scaffolding protein is cleaved by assemblin after formation of the spherical procapsid. As a result, the capsid obtains its mature, icosahedral shape. Cleavages occur at two or more sites: release (R-site) and maturation (M-site).

The protein resides in the host cytoplasm. Its subcellular location is the host nucleus. It catalyses the reaction Cleaves -Ala-|-Ser- and -Ala-|-Ala- bonds in the scaffold protein.. In terms of biological role, acts as a scaffold protein by binding major capsid protein in the cytoplasm, inducing the nuclear localization of both proteins. Multimerizes in the nucleus such as major capsid protein forms the icosahedral T=16 capsid. Autocatalytic cleavage releases the assembly protein, and subsequently abolishes interaction with major capsid protein. Cleavages products are evicted from the capsid before or during DNA packaging. Functionally, protease that plays an essential role in virion assembly within the nucleus. Catalyzes the cleavage of the assembly protein after formation of the spherical procapsid. By that cleavage, the capsid matures and gains its icosahedral shape. The cleavage sites seem to include -Ala-Ser-, -Ala-Ala-, as well as Ala-Thr bonds. Assemblin and cleavages products are evicted from the capsid before or during DNA packaging. Its function is as follows. Plays a major role in capsid assembly. Acts as a scaffold protein by binding major capsid protein. Multimerizes in the nucleus such as major capsid protein forms the icosahedral T=16 capsid. Cleaved by assemblin after capsid completion. The cleavages products are evicted from the capsid before or during DNA packaging. In Epstein-Barr virus (strain AG876) (HHV-4), this protein is Capsid scaffolding protein.